Consider the following 887-residue polypeptide: Protein PTHB1 (887 aa).

Residues 1–407 (MSLFKARDWW…SQGVWPMTER (407 aa)) are seven-bladed beta-propeller. Residues 685–765 (KDKTPAPLQH…FLPLQEDTQE (81 aa)) form an interaction with LZTL1 region. The tract at residues 850–887 (DLEERSVEQDSTELFTNHRHLTAETPRPEVSPLQGVSE) is disordered.

As to quaternary structure, part of BBSome complex, that contains BBS1, BBS2, BBS4, BBS5, BBS7, BBS8/TTC8, BBS9 and BBIP10. Interacts with LZTL1; the interaction mediates the association of LZTL1 with the BBsome complex and regulates BBSome ciliary trafficking. In terms of tissue distribution, widely expressed. Expressed in adult heart, skeletal muscle, lung, liver, kidney, placenta and brain, and in fetal kidney, lung, liver and brain.

It localises to the cytoplasm. The protein localises to the cytoskeleton. The protein resides in the microtubule organizing center. It is found in the centrosome. Its subcellular location is the cell projection. It localises to the cilium membrane. The protein localises to the centriolar satellite. In terms of biological role, the BBSome complex is thought to function as a coat complex required for sorting of specific membrane proteins to the primary cilia. The BBSome complex is required for ciliogenesis but is dispensable for centriolar satellite function. This ciliogenic function is mediated in part by the Rab8 GDP/GTP exchange factor, which localizes to the basal body and contacts the BBSome. Rab8(GTP) enters the primary cilium and promotes extension of the ciliary membrane. Firstly the BBSome associates with the ciliary membrane and binds to RAB3IP/Rabin8, the guanosyl exchange factor (GEF) for Rab8 and then the Rab8-GTP localizes to the cilium and promotes docking and fusion of carrier vesicles to the base of the ciliary membrane. Required for proper BBSome complex assembly and its ciliary localization. The protein is Protein PTHB1 (BBS9) of Homo sapiens (Human).